The sequence spans 324 residues: Aspartate carbamoyltransferase catalytic subunit (324 aa).

2 residues coordinate carbamoyl phosphate: Arg55 and Thr56. Lys83 contributes to the L-aspartate binding site. 3 residues coordinate carbamoyl phosphate: Arg105, His135, and Gln138. Arg173 and Arg227 together coordinate L-aspartate. Positions 268 and 269 each coordinate carbamoyl phosphate.

It belongs to the aspartate/ornithine carbamoyltransferase superfamily. ATCase family. In terms of assembly, heterododecamer (2C3:3R2) of six catalytic PyrB chains organized as two trimers (C3), and six regulatory PyrI chains organized as three dimers (R2).

The enzyme catalyses carbamoyl phosphate + L-aspartate = N-carbamoyl-L-aspartate + phosphate + H(+). It functions in the pathway pyrimidine metabolism; UMP biosynthesis via de novo pathway; (S)-dihydroorotate from bicarbonate: step 2/3. In terms of biological role, catalyzes the condensation of carbamoyl phosphate and aspartate to form carbamoyl aspartate and inorganic phosphate, the committed step in the de novo pyrimidine nucleotide biosynthesis pathway. This Nocardioides sp. (strain ATCC BAA-499 / JS614) protein is Aspartate carbamoyltransferase catalytic subunit.